The chain runs to 284 residues: MAESEAETPSTPGEFESKYFEFHGVRLPPFCRGKMEEIANFPVRPSDVWIVTYPKSGTSLLQEVVYLVSQGADPDEIGLMNIDEQLPVLEYPQPGLDIIKELTSPRLIKSHLPYRFLPSDLHNGDSKVIYMARNPKDLVVSYYQFHRSLRTMSYRGTFQEFCRRFMNDKLGYGSWFEHVQEFWEHRMDSNVLFLKYEDMHRDLVTMVEQLARFLGVSCDKAQLEALTEHCHQLVDQCCNAEALPVGRGRVGLWKDIFTVSMNEKFDLVYKQKMGKCDLTFDFYL.

Residues threonine 8, threonine 11, and threonine 205 each carry the phosphothreonine modification.

This sequence belongs to the sulfotransferase 1 family. In terms of tissue distribution, highly expressed in the cerebral cortex and frontal lobe, slightly less in the cerebellum, occipital and temporal lobes, relatively low in the medulla and putamen, and lowest in the spinal cord. No expression detected in the pancreas. Highly expressed in fetal brain and occipital lobe, slightly less in the whole brain, frontal lobe, hippocampus, and lung, very low expression in cerebellum, medulla oblongata, temporal lobe, testis, kidney and appendix.

It is found in the cytoplasm. Atypical sulfotransferase family member with very low affinity for 3'-phospho-5'-adenylyl sulfate (PAPS) and very low catalytic activity towards L-triiodothyronine, thyroxine, estrone, p-nitrophenol, 2-naphthylamine, and 2-beta-naphthol. May have a role in the metabolism of drugs and neurotransmitters in the CNS. This Homo sapiens (Human) protein is Sulfotransferase 4A1 (SULT4A1).